A 679-amino-acid polypeptide reads, in one-letter code: Glycine--tRNA ligase beta subunit (679 aa).

This sequence belongs to the class-II aminoacyl-tRNA synthetase family. In terms of assembly, tetramer of two alpha and two beta subunits.

The protein resides in the cytoplasm. It catalyses the reaction tRNA(Gly) + glycine + ATP = glycyl-tRNA(Gly) + AMP + diphosphate. In Streptococcus pyogenes serotype M2 (strain MGAS10270), this protein is Glycine--tRNA ligase beta subunit.